Consider the following 188-residue polypeptide: dTTP/UTP pyrophosphatase (188 aa).

Catalysis depends on D67, which acts as the Proton acceptor.

The protein belongs to the Maf family. YhdE subfamily. Requires a divalent metal cation as cofactor.

The protein resides in the cytoplasm. It carries out the reaction dTTP + H2O = dTMP + diphosphate + H(+). It catalyses the reaction UTP + H2O = UMP + diphosphate + H(+). Functionally, nucleoside triphosphate pyrophosphatase that hydrolyzes dTTP and UTP. May have a dual role in cell division arrest and in preventing the incorporation of modified nucleotides into cellular nucleic acids. The sequence is that of dTTP/UTP pyrophosphatase from Thermococcus kodakarensis (strain ATCC BAA-918 / JCM 12380 / KOD1) (Pyrococcus kodakaraensis (strain KOD1)).